Here is a 764-residue protein sequence, read N- to C-terminus: Nucleolar transcription factor 1 (764 aa).

Met1 bears the N-acetylmethionine mark. The interval 1–21 (MNGEADCPTDLEMAAPKGQDR) is disordered. 2 consecutive DNA-binding regions (HMG box) follow at residues 112 to 180 (PKKP…ARFR) and 196 to 264 (PEKP…RDYI). Thr201 is subject to Phosphothreonine. Residues Ser273, Ser336, and Ser364 each carry the phosphoserine modification. The segment at residues 298-362 (TKPPPNSYSL…DYEVELLRFL (65 aa)) is a DNA-binding region (HMG box 3). The segment covering 370 to 379 (QQRVLGEEKM) has biased composition (basic and acidic residues). The interval 370–411 (QQRVLGEEKMLNINKKQTTSPASKKPSQEGGKGGSEKPKRPV) is disordered. Ser389, Ser412, Ser433, Ser435, Ser484, Ser495, Ser546, Ser584, and Ser638 each carry phosphoserine. 3 DNA-binding regions (HMG box) span residues 407-475 (PKRP…GGER), 482-549 (PESP…SEMR), and 568-634 (KKPP…DLWV). Residues 456–488 (YKAREAALKAQSERKPGGEREDRGKLPESPKRA) form a disordered region. Over residues 457–488 (KAREAALKAQSERKPGGEREDRGKLPESPKRA) the composition is skewed to basic and acidic residues. The tract at residues 546–576 (SEMRAPPAATNSSKKMKFQGEPKKPPMNGYQ) is disordered. A disordered region spans residues 648–764 (YISNKRKNMT…SGDSSDSDSN (117 aa)). The span at 664–674 (PKSSRTTLQSK) shows a compositional bias: polar residues. The segment covering 677 to 745 (SEEDDDEEDD…DDDEDEDNES (69 aa)) has biased composition (acidic residues). The segment covering 746 to 758 (EGSSSSSSSSGDS) has biased composition (low complexity).

As to quaternary structure, homodimer. Part of Pol I pre-initiation complex (PIC), in which Pol I core assembles with RRN3 and promoter-bound UTBF and SL1/TIF-IB complex. Interacts with TOP2A in the context of Pol I complex. Interacts with TBP. Interacts with TAF1A. Interacts with PHF6. Interacts with CEBPA (isoform 1 and isoform 4). Interacts with DDX11. Interacts with NOP53. Interacts with RASL11A. Interacts with DHX33. Binds to IRS1 and PIK3CA. Interacts with ALKBH2. Post-translationally, phosphorylated and activated by PIK3CA.

The protein resides in the nucleus. It localises to the nucleolus. In terms of biological role, recognizes the ribosomal RNA gene promoter and activates transcription mediated by RNA polymerase I through cooperative interactions with the transcription factor SL1/TIF-IB complex. It binds specifically to the upstream control element. In Rattus norvegicus (Rat), this protein is Nucleolar transcription factor 1 (Ubtf).